The chain runs to 242 residues: Cell division protein FtsQ (242 aa).

The Cytoplasmic portion of the chain corresponds to 1–12 (MWDNAEAMERLT). A helical transmembrane segment spans residues 13 to 32 (RWLLVMMAMLLAASGLVWFY). At 33-242 (NSNHLPVKQV…DGLPEKESEE (210 aa)) the chain is on the periplasmic side. Positions 37 to 106 (LPVKQVSLKG…DTVEVVLTER (70 aa)) constitute a POTRA domain.

Belongs to the FtsQ/DivIB family. FtsQ subfamily. As to quaternary structure, part of a complex composed of FtsB, FtsL and FtsQ.

The protein resides in the cell inner membrane. In terms of biological role, essential cell division protein. May link together the upstream cell division proteins, which are predominantly cytoplasmic, with the downstream cell division proteins, which are predominantly periplasmic. May control correct divisome assembly. This chain is Cell division protein FtsQ, found in Neisseria gonorrhoeae (strain ATCC 700825 / FA 1090).